Reading from the N-terminus, the 359-residue chain is Protein HEXIM1 (359 aa).

Residues 1-163 are disordered; sequence MAEPFLSEYQ…RRRPSKKKRH (163 aa). The span at 9–19 shows a compositional bias: polar residues; the sequence is YQHQPQTSNCT. Basic and acidic residues-rich tracts occupy residues 34–47 and 84–93; these read PGAE…DSRW and CLREGEKGQN. Phosphoserine occurs at positions 97 and 98. Positions 148–163 are enriched in basic residues; it reads LGKKKHRRRPSKKKRH. The basic region; mediates nuclear localization and interaction with 7SK snRNA and NR3C1 stretch occupies residues 150–177; the sequence is KKKHRRRPSKKKRHWKPYYKLTWEEKKK. An interaction with P-TEFb region spans residues 202 to 205; it reads PYNT. Residues 210–250 form an autoinhibitory acidic region; in absence of 7SK snRNA interacts with the basic region preventing interaction with P-TEFb and modulating subcellular localization region; sequence MDDHDQEEPDLKTGLYSKRAAAKSDDTSDDDFMEEGGEEDG. The disordered stretch occupies residues 213–262; that stretch reads HDQEEPDLKTGLYSKRAAAKSDDTSDDDFMEEGGEEDGGSDGMGGDGSEF. Phosphoserine is present on S233. Position 236 is a phosphothreonine (T236). Residues 236–251 are compositionally biased toward acidic residues; the sequence is TSDDDFMEEGGEEDGG. Residues S237, S252, and S260 each carry the phosphoserine modification. Residues 283 to 349 are a coiled coil; it reads SKQELIKEYL…LTENELHRQQ (67 aa). The interval 286–314 is mediates interaction with CCNT1; it reads ELIKEYLELEKCLSRMEDENNRLRLESKR. The tract at residues 310–355 is required for inhibition of ESR1-dependent transcription; it reads LESKRLGGDDARVRELELELDRLRAENLQLLTENELHRQQERAPLS.

The protein belongs to the HEXIM family. In terms of assembly, homooligomer and heterooligomer with HEXIM2; probably dimeric. Core component of the 7SK RNP complex, at least composed of 7SK RNA, LARP7, MEPCE, HEXIM1 (or HEXIM2) and P-TEFb (composed of CDK9 and CCNT1/cyclin-T1). Interacts with the N-CoR complex through NCOR1. Interacts with ESR1 and NR3C1. May interact with NF-kappa-B through RELA. Interacts with CCNT2; mediates formation of a tripartite complex with KPNA2. Part of the HDP-RNP complex composed of at least HEXIM1, PRKDC, XRCC5, XRCC6, paraspeckle proteins (SFPQ, NONO, PSPC1, RBM14, and MATR3) and NEAT1 non-coding RNA. Ubiquitously expressed with higher expression in placenta. HEXIM1 and HEXIM2 are differentially expressed. Expressed in endocrine tissues.

The protein localises to the nucleus. The protein resides in the cytoplasm. Functionally, transcriptional regulator which functions as a general RNA polymerase II transcription inhibitor. Core component of the 7SK RNP complex: in cooperation with 7SK snRNA sequesters P-TEFb in a large inactive 7SK snRNP complex preventing RNA polymerase II phosphorylation and subsequent transcriptional elongation. May also regulate NF-kappa-B, ESR1, NR3C1 and CIITA-dependent transcriptional activity. Plays a role in the regulation of DNA virus-mediated innate immune response by assembling into the HDP-RNP complex, a complex that serves as a platform for IRF3 phosphorylation and subsequent innate immune response activation through the cGAS-STING pathway. This chain is Protein HEXIM1 (HEXIM1), found in Homo sapiens (Human).